The chain runs to 84 residues: U4-theraphotoxin-Hhn1n (84 aa).

The N-terminal stretch at 1–22 (MKVTLIAILTCAAVLVLHTTAA) is a signal peptide. Positions 23–47 (EELEESQLMEVGMPDTELAAVDEER) are excised as a propeptide. Disulfide bonds link C51/C65, C55/C76, and C70/C81.

This sequence belongs to the neurotoxin 12 (Hwtx-2) family. 02 (Hwtx-2) subfamily. As to expression, expressed by the venom gland.

The protein localises to the secreted. Its function is as follows. Postsynaptic neurotoxin. This Cyriopagopus hainanus (Chinese bird spider) protein is U4-theraphotoxin-Hhn1n.